Reading from the N-terminus, the 254-residue chain is Type III pantothenate kinase (254 aa).

6–13 (DVGNSNIV) is an ATP binding site. Residues Y100 and 107 to 110 (GADR) each bind substrate. The active-site Proton acceptor is D109. Position 129 (D129) interacts with K(+). T132 is a binding site for ATP. T184 serves as a coordination point for substrate.

The protein belongs to the type III pantothenate kinase family. In terms of assembly, homodimer. NH4(+) is required as a cofactor. K(+) serves as cofactor.

It localises to the cytoplasm. The catalysed reaction is (R)-pantothenate + ATP = (R)-4'-phosphopantothenate + ADP + H(+). It functions in the pathway cofactor biosynthesis; coenzyme A biosynthesis; CoA from (R)-pantothenate: step 1/5. Its function is as follows. Catalyzes the phosphorylation of pantothenate (Pan), the first step in CoA biosynthesis. This chain is Type III pantothenate kinase, found in Geobacter sp. (strain M21).